A 143-amino-acid chain; its full sequence is ATP synthase subunit b' (143 aa).

A helical membrane pass occupies residues 6–26; that stretch reads ATLPLMALQFLVLAVVLNAVF.

The protein belongs to the ATPase B chain family. F-type ATPases have 2 components, F(1) - the catalytic core - and F(0) - the membrane proton channel. F(1) has five subunits: alpha(3), beta(3), gamma(1), delta(1), epsilon(1). F(0) has four main subunits: a(1), b(1), b'(1) and c(10-14). The alpha and beta chains form an alternating ring which encloses part of the gamma chain. F(1) is attached to F(0) by a central stalk formed by the gamma and epsilon chains, while a peripheral stalk is formed by the delta, b and b' chains.

It is found in the cellular thylakoid membrane. In terms of biological role, f(1)F(0) ATP synthase produces ATP from ADP in the presence of a proton or sodium gradient. F-type ATPases consist of two structural domains, F(1) containing the extramembraneous catalytic core and F(0) containing the membrane proton channel, linked together by a central stalk and a peripheral stalk. During catalysis, ATP synthesis in the catalytic domain of F(1) is coupled via a rotary mechanism of the central stalk subunits to proton translocation. Component of the F(0) channel, it forms part of the peripheral stalk, linking F(1) to F(0). The b'-subunit is a diverged and duplicated form of b found in plants and photosynthetic bacteria. The sequence is that of ATP synthase subunit b' from Gloeothece citriformis (strain PCC 7424) (Cyanothece sp. (strain PCC 7424)).